A 278-amino-acid polypeptide reads, in one-letter code: Large ribosomal subunit protein uL24m (278 aa).

The region spanning 109 to 142 (FFPGDLVQVMVGKDKGRQGLVLTTSRDSSDVIVD) is the KOW domain.

It belongs to the universal ribosomal protein uL24 family.

The protein resides in the mitochondrion. The chain is Large ribosomal subunit protein uL24m (mrpl-24) from Caenorhabditis elegans.